We begin with the raw amino-acid sequence, 84 residues long: Small ribosomal subunit protein bS16 (84 aa).

It belongs to the bacterial ribosomal protein bS16 family.

The protein is Small ribosomal subunit protein bS16 of Paraburkholderia phymatum (strain DSM 17167 / CIP 108236 / LMG 21445 / STM815) (Burkholderia phymatum).